Consider the following 227-residue polypeptide: ATP-dependent dethiobiotin synthetase BioD (227 aa).

13-18 contributes to the ATP binding site; the sequence is NIGKTV. Residue Thr17 participates in Mg(2+) binding. Residue Lys38 is part of the active site. ATP-binding positions include Asp55 and 116-119; that span reads EGIG. 2 residues coordinate Mg(2+): Asp55 and Glu116.

This sequence belongs to the dethiobiotin synthetase family. As to quaternary structure, homodimer. Requires Mg(2+) as cofactor.

It is found in the cytoplasm. The catalysed reaction is (7R,8S)-7,8-diammoniononanoate + CO2 + ATP = (4R,5S)-dethiobiotin + ADP + phosphate + 3 H(+). It functions in the pathway cofactor biosynthesis; biotin biosynthesis; biotin from 7,8-diaminononanoate: step 1/2. Catalyzes a mechanistically unusual reaction, the ATP-dependent insertion of CO2 between the N7 and N8 nitrogen atoms of 7,8-diaminopelargonic acid (DAPA, also called 7,8-diammoniononanoate) to form a ureido ring. This Buchnera aphidicola subsp. Baizongia pistaciae (strain Bp) protein is ATP-dependent dethiobiotin synthetase BioD.